A 589-amino-acid chain; its full sequence is Serine/threonine-protein phosphatase 2A 65 kDa regulatory subunit A alpha isoform (589 aa).

Alanine 2 is subject to N-acetylalanine. HEAT repeat units follow at residues 8–46 (DSLY…GVER), 47–84 (TRSE…GGPE), 85–123 (YVHC…SPSD), 124–161 (LEAH…VSSA), 162–200 (VKAE…ELDN), 201–239 (VKSE…PQED), 240–278 (LEAL…GPEI), 279–321 (TKTD…RENV), 322–360 (IMTQ…GKDN), 361–399 (TIEH…GIRQ), 400–438 (LSQS…GVEF), 439–477 (FDEK…GKEW), 478–516 (AHAT…GQDI), 517–555 (TTKH…DNST), and 556–589 (LQSE…LSLA). Lysine 280 is modified (N6-acetyllysine).

It belongs to the phosphatase 2A regulatory subunit A family. PP2A consists of a common heterodimeric core enzyme, composed of PPP2CA a 36 kDa catalytic subunit (subunit C) and PPP2R1A a 65 kDa constant regulatory subunit (PR65 or subunit A), that associates with a variety of regulatory subunits. Proteins that associate with the core dimer include three families of regulatory subunits B (the R2/B/PR55/B55, R3/B''/PR72/PR130/PR59 and R5/B'/B56 families), the 48 kDa variable regulatory subunit, viral proteins, and cell signaling molecules. Found in a complex with at least ARL2, PPP2CB, PPP2R1A, PPP2R2A, PPP2R5E and TBCD. Interacts with the PP2A C catalytic subunit PPP2CA. Interacts with the PP2A B subunit PPP2R2A. Interacts with the PP2A B subunit PPP2R5D. Interacts with FOXO1; the interaction dephosphorylates FOXO1 on AKT-mediated phosphorylation sites. Interacts with IPO9. Interacts with TP53 and SGO1. Interacts with PLA2G16; this interaction might decrease PP2A activity. Interacts with CTTNBP2NL. Interacts with GNA12; the interaction promotes protein phosphatase 2A activation causing dephosphorylation of MAPT. Interacts with CIP2A; this interaction stabilizes CIP2A. Interacts with PABIR1/FAM122A. Interacts with ADCY8; antagonizes interaction between ADCY8 and calmodulin. Interacts with CRTC3 (when phosphorylated at 'Ser-391'). Interacts with SPRY2. Part of the core of STRIPAK complexes composed of PP2A catalytic and scaffolding subunits, the striatins (PP2A regulatory subunits), the striatin-associated proteins MOB4, STRIP1 and STRIP2, PDCD10 and members of the STE20 kinases, such as STK24 and STK26. Component of the Integrator-PP2A (INTAC) complex, composed of the Integrator core complex and protein phosphatase 2A subunits PPP2CA and PPP2R1A.

The protein resides in the cytoplasm. It localises to the nucleus. The protein localises to the chromosome. It is found in the centromere. Its subcellular location is the lateral cell membrane. The protein resides in the cell projection. It localises to the dendrite. In terms of biological role, the PR65 subunit of protein phosphatase 2A serves as a scaffolding molecule to coordinate the assembly of the catalytic subunit and a variable regulatory B subunit. Upon interaction with GNA12 promotes dephosphorylation of microtubule associated protein TAU/MAPT. Required for proper chromosome segregation and for centromeric localization of SGO1 in mitosis. Together with RACK1 adapter, mediates dephosphorylation of AKT1 at 'Ser-473', preventing AKT1 activation and AKT-mTOR signaling pathway. Dephosphorylation of AKT1 is essential for regulatory T-cells (Treg) homeostasis and stability. Part of the striatin-interacting phosphatase and kinase (STRIPAK) complexes. STRIPAK complexes have critical roles in protein (de)phosphorylation and are regulators of multiple signaling pathways including Hippo, MAPK, nuclear receptor and cytoskeleton remodeling. Different types of STRIPAK complexes are involved in a variety of biological processes such as cell growth, differentiation, apoptosis, metabolism and immune regulation. Key mediator of a quality checkpoint during transcription elongation as part of the Integrator-PP2A (INTAC) complex. The INTAC complex drives premature transcription termination of transcripts that are unfavorably configured for transcriptional elongation: within the INTAC complex, acts as a scaffolding subunit for PPP2CA, which catalyzes dephosphorylation of the C-terminal domain (CTD) of Pol II subunit POLR2A/RPB1 and SUPT5H/SPT5, thereby preventing transcriptional elongation. Regulates the recruitment of the SKA complex to kinetochores. The protein is Serine/threonine-protein phosphatase 2A 65 kDa regulatory subunit A alpha isoform (Ppp2r1a) of Mus musculus (Mouse).